A 450-amino-acid chain; its full sequence is Glycerol dehydrogenase 1 (450 aa).

NAD(+) contacts are provided by residues D99, 155–159 (GKTMD), and 177–180 (TTAS). D182 lines the substrate pocket. NAD(+) contacts are provided by S186, L188, and Y192. Residues D232, H315, and H333 each coordinate substrate. Residues D232, H315, and H333 each contribute to the Zn(2+) site.

This sequence belongs to the iron-containing alcohol dehydrogenase family. The cofactor is Zn(2+).

The protein resides in the mitochondrion. It catalyses the reaction glycerol + NAD(+) = dihydroxyacetone + NADH + H(+). The protein operates within polyol metabolism; glycerol fermentation; glycerone phosphate from glycerol (oxidative route): step 1/2. Functionally, glycerol dehydrogenase involved in the assimilation of glycerol. The sequence is that of Glycerol dehydrogenase 1 (gld1) from Schizosaccharomyces pombe (strain 972 / ATCC 24843) (Fission yeast).